A 455-amino-acid chain; its full sequence is Probable transcription factor GLK1 (455 aa).

The segment covering 145–163 (AAVEAKSSSPSSTTSSSQE) has biased composition (low complexity). The disordered stretch occupies residues 145 to 183 (AAVEAKSSSPSSTTSSSQEAESRHKSSSKSSHGKKKAKV). The segment covering 169 to 181 (KSSSKSSHGKKKA) has biased composition (basic residues). Positions 177–236 (GKKKAKVDWTPELHRRFVQAVEQLGIDKAVPSRILEIMGIDSLTRHNIASHLQKYRSHRK) constitute an HTH myb-type domain. The H-T-H motif DNA-binding region spans 207-232 (PSRILEIMGIDSLTRHNIASHLQKYR).

In terms of tissue distribution, expressed in leaves.

Its subcellular location is the nucleus. Its function is as follows. Probable transcriptional activator that promotes chloroplast development. Acts as an activator of nuclear photosynthetic genes involved in chlorophyll biosynthesis, light harvesting, and electron transport. This is Probable transcription factor GLK1 (GLK1) from Oryza sativa subsp. japonica (Rice).